A 368-amino-acid chain; its full sequence is Dihydroorotate dehydrogenase (quinone) (368 aa).

FMN contacts are provided by residues A67–K71 and T91. K71 contacts substrate. N116 to F120 is a binding site for substrate. FMN is bound by residues N146 and N179. N179 contacts substrate. The active-site Nucleophile is the S182. A substrate-binding site is contributed by N184. 2 residues coordinate FMN: K222 and T250. N251–T252 lines the substrate pocket. Residues G276, G305, and Y326–S327 each bind FMN.

The protein belongs to the dihydroorotate dehydrogenase family. Type 2 subfamily. Monomer. It depends on FMN as a cofactor.

The protein resides in the cell membrane. The catalysed reaction is (S)-dihydroorotate + a quinone = orotate + a quinol. Its pathway is pyrimidine metabolism; UMP biosynthesis via de novo pathway; orotate from (S)-dihydroorotate (quinone route): step 1/1. Functionally, catalyzes the conversion of dihydroorotate to orotate with quinone as electron acceptor. The sequence is that of Dihydroorotate dehydrogenase (quinone) from Streptomyces avermitilis (strain ATCC 31267 / DSM 46492 / JCM 5070 / NBRC 14893 / NCIMB 12804 / NRRL 8165 / MA-4680).